The following is a 487-amino-acid chain: Bifunctional protein GlmU (487 aa).

Residues 1–240 (MAEVTNCAAI…PEELSGVNDR (240 aa)) form a pyrophosphorylase region. UDP-N-acetyl-alpha-D-glucosamine-binding positions include 12–15 (LAAG), lysine 26, glutamine 83, and 88–89 (GT). Aspartate 113 contributes to the Mg(2+) binding site. The UDP-N-acetyl-alpha-D-glucosamine site is built by glycine 150, glutamate 165, asparagine 180, and asparagine 238. Residue asparagine 238 coordinates Mg(2+). The interval 241 to 261 (VQLAAAGRLLNRRMVEEAMRG) is linker. Residues 262-487 (GTTIVDPDTT…DAKANDQTTN (226 aa)) are N-acetyltransferase. Residues arginine 343 and lysine 361 each contribute to the UDP-N-acetyl-alpha-D-glucosamine site. Histidine 373 (proton acceptor) is an active-site residue. Residues tyrosine 376 and asparagine 387 each coordinate UDP-N-acetyl-alpha-D-glucosamine. Acetyl-CoA contacts are provided by residues alanine 390, 396–397 (NY), serine 415, and alanine 433. Residues 449–487 (SGGKQRNIEGWVQKKRPGTPAAEAAGKAQDAKANDQTTN) are disordered.

This sequence in the N-terminal section; belongs to the N-acetylglucosamine-1-phosphate uridyltransferase family. It in the C-terminal section; belongs to the transferase hexapeptide repeat family. In terms of assembly, homotrimer. The cofactor is Mg(2+).

The protein localises to the cytoplasm. It carries out the reaction alpha-D-glucosamine 1-phosphate + acetyl-CoA = N-acetyl-alpha-D-glucosamine 1-phosphate + CoA + H(+). The enzyme catalyses N-acetyl-alpha-D-glucosamine 1-phosphate + UTP + H(+) = UDP-N-acetyl-alpha-D-glucosamine + diphosphate. It functions in the pathway nucleotide-sugar biosynthesis; UDP-N-acetyl-alpha-D-glucosamine biosynthesis; N-acetyl-alpha-D-glucosamine 1-phosphate from alpha-D-glucosamine 6-phosphate (route II): step 2/2. The protein operates within nucleotide-sugar biosynthesis; UDP-N-acetyl-alpha-D-glucosamine biosynthesis; UDP-N-acetyl-alpha-D-glucosamine from N-acetyl-alpha-D-glucosamine 1-phosphate: step 1/1. Its pathway is bacterial outer membrane biogenesis; LPS lipid A biosynthesis. Its function is as follows. Catalyzes the last two sequential reactions in the de novo biosynthetic pathway for UDP-N-acetylglucosamine (UDP-GlcNAc). The C-terminal domain catalyzes the transfer of acetyl group from acetyl coenzyme A to glucosamine-1-phosphate (GlcN-1-P) to produce N-acetylglucosamine-1-phosphate (GlcNAc-1-P), which is converted into UDP-GlcNAc by the transfer of uridine 5-monophosphate (from uridine 5-triphosphate), a reaction catalyzed by the N-terminal domain. The chain is Bifunctional protein GlmU from Corynebacterium aurimucosum (strain ATCC 700975 / DSM 44827 / CIP 107346 / CN-1) (Corynebacterium nigricans).